Here is a 249-residue protein sequence, read N- to C-terminus: 2,3-bisphosphoglycerate-dependent phosphoglycerate mutase (249 aa).

Substrate contacts are provided by residues arginine 8–asparagine 15, threonine 21–glycine 22, arginine 60, glutamate 87–tyrosine 90, lysine 98, arginine 114–arginine 115, and glycine 183–asparagine 184. The active-site Tele-phosphohistidine intermediate is the histidine 9. The active-site Proton donor/acceptor is glutamate 87.

The protein belongs to the phosphoglycerate mutase family. BPG-dependent PGAM subfamily. As to quaternary structure, homodimer.

The enzyme catalyses (2R)-2-phosphoglycerate = (2R)-3-phosphoglycerate. It participates in carbohydrate degradation; glycolysis; pyruvate from D-glyceraldehyde 3-phosphate: step 3/5. Functionally, catalyzes the interconversion of 2-phosphoglycerate and 3-phosphoglycerate. The polypeptide is 2,3-bisphosphoglycerate-dependent phosphoglycerate mutase (Azoarcus sp. (strain BH72)).